The following is a 555-amino-acid chain: Protein NRT1/ PTR FAMILY 5.4 (555 aa).

2 consecutive transmembrane segments (helical) span residues Ala-18–Ser-38 and Trp-62–Gly-82. Thr-86 carries the phosphothreonine modification. 10 helical membrane-spanning segments follow: residues Val-87–Val-107, Val-116–Met-136, Asn-159–Ile-179, Leu-187–Ile-207, Ile-311–Phe-331, Ile-348–Tyr-368, Ile-392–Lys-412, Leu-435–Met-455, Ile-470–Ile-490, and Tyr-516–Ala-536.

The protein belongs to the major facilitator superfamily. Proton-dependent oligopeptide transporter (POT/PTR) (TC 2.A.17) family. Expressed in roots and flowers.

The protein resides in the membrane. The sequence is that of Protein NRT1/ PTR FAMILY 5.4 (NPF5.4) from Arabidopsis thaliana (Mouse-ear cress).